Here is a 267-residue protein sequence, read N- to C-terminus: Cyclin-C (267 aa).

The Cyclin N-terminal domain maps to I48–I151.

The protein belongs to the cyclin family. Cyclin C subfamily. In terms of assembly, component of the Cdk8 module of the Mediator complex.

Its subcellular location is the nucleus. Its function is as follows. Component of the Mediator complex, a coactivator involved in regulated gene transcription of nearly all RNA polymerase II-dependent genes. Mediator functions as a bridge to convey information from gene-specific regulatory proteins to the basal RNA polymerase II transcription machinery. Mediator is recruited to promoters by direct interactions with regulatory proteins and serves as a scaffold for the assembly of a functional preinitiation complex with RNA polymerase II and the general transcription factors. Binds to and activates cyclin-dependent kinase Cdk8 that phosphorylates the CTD (C-terminal domain) of the large subunit of RNA polymerase II (RNAp II), which may inhibit the formation of a transcription initiation complex. This chain is Cyclin-C (CycC), found in Drosophila pseudoobscura pseudoobscura (Fruit fly).